Here is a 491-residue protein sequence, read N- to C-terminus: UDP-N-acetylmuramate--L-alanine ligase (491 aa).

Residue 126-132 (GTHGKTT) coordinates ATP.

The protein belongs to the MurCDEF family.

The protein resides in the cytoplasm. The catalysed reaction is UDP-N-acetyl-alpha-D-muramate + L-alanine + ATP = UDP-N-acetyl-alpha-D-muramoyl-L-alanine + ADP + phosphate + H(+). Its pathway is cell wall biogenesis; peptidoglycan biosynthesis. Its function is as follows. Cell wall formation. The polypeptide is UDP-N-acetylmuramate--L-alanine ligase (Enterobacter sp. (strain 638)).